The following is a 213-amino-acid chain: N-(5'-phosphoribosyl)anthranilate isomerase (213 aa).

Belongs to the TrpF family.

The catalysed reaction is N-(5-phospho-beta-D-ribosyl)anthranilate = 1-(2-carboxyphenylamino)-1-deoxy-D-ribulose 5-phosphate. It functions in the pathway amino-acid biosynthesis; L-tryptophan biosynthesis; L-tryptophan from chorismate: step 3/5. The chain is N-(5'-phosphoribosyl)anthranilate isomerase from Leptospira interrogans serogroup Icterohaemorrhagiae serovar copenhageni (strain Fiocruz L1-130).